The primary structure comprises 201 residues: 5'(3')-deoxyribonucleotidase, cytosolic type (201 aa).

D10 serves as the catalytic Nucleophile. Residues D10 and D12 each contribute to the Mg(2+) site. D12 serves as the catalytic Proton donor. 5 residues coordinate substrate: F18, F44, Y65, T99, and K134. Residue D145 coordinates Mg(2+). S182 carries the post-translational modification Phosphoserine.

The protein belongs to the 5'(3')-deoxyribonucleotidase family. As to quaternary structure, homodimer. Mg(2+) is required as a cofactor. Detected in skeletal muscle, heart and pancreas.

The protein resides in the cytoplasm. In terms of biological role, dephosphorylates the 5' and 2'(3')-phosphates of deoxyribonucleotides, with a preference for dUMP and dTMP, intermediate activity towards dGMP, and low activity towards dCMP and dAMP. The chain is 5'(3')-deoxyribonucleotidase, cytosolic type (NT5C) from Homo sapiens (Human).